A 562-amino-acid polypeptide reads, in one-letter code: 4-coumarate--CoA ligase-like 9 (562 aa).

ATP is bound by residues S212, S213, G214, T215, T216, and K220. R281 is a binding site for CoA. Residues 283–352 (ELEAMFKAVE…QKFPDVDIVQ (70 aa)) are SBD1. Positions 352, 353, 357, 438, and 453 each coordinate ATP. Positions 353–417 (GYGLTESSGP…LRGPVIMKGY (65 aa)) are SBD2. CoA contacts are provided by K461 and A462. Residue K544 participates in ATP binding. The short motif at 560–562 (SKL) is the Microbody targeting signal element.

It belongs to the ATP-dependent AMP-binding enzyme family. It depends on Mg(2+) as a cofactor. As to expression, expressed at low level in leaves.

The protein resides in the peroxisome. It catalyses the reaction (9S,13S,15Z)-12-oxophyto-10,15-dienoate + ATP + CoA = (10Z,15Z)-12-oxophytodienoyl-CoA + AMP + diphosphate. The catalysed reaction is hexadecanoate + ATP + CoA = hexadecanoyl-CoA + AMP + diphosphate. The enzyme catalyses (9Z)-octadecenoate + ATP + CoA = (9Z)-octadecenoyl-CoA + AMP + diphosphate. It carries out the reaction octadecanoate + ATP + CoA = octadecanoyl-CoA + AMP + diphosphate. It catalyses the reaction tetradecanoate + ATP + CoA = tetradecanoyl-CoA + AMP + diphosphate. The catalysed reaction is dodecanoate + ATP + CoA = dodecanoyl-CoA + AMP + diphosphate. The enzyme catalyses decanoate + ATP + CoA = decanoyl-CoA + AMP + diphosphate. It carries out the reaction octanoate + ATP + CoA = octanoyl-CoA + AMP + diphosphate. It catalyses the reaction (9Z,12Z)-octadecadienoate + ATP + CoA = (9Z,12Z)-octadecadienoyl-CoA + AMP + diphosphate. The catalysed reaction is (9Z,12Z,15Z)-octadecatrienoate + ATP + CoA = (9Z,12Z,15Z)-octadecatrienoyl-CoA + AMP + diphosphate. The enzyme catalyses nonanoate + ATP + CoA = nonanoyl-CoA + AMP + diphosphate. Contributes to jasmonic acid biosynthesis by initiating the beta-oxidative chain shortening of its precursors. Converts 12-oxo-phytodienoic acid (OPDA) into OPDA-CoA. Follows a two-step reaction mechanism, wherein the carboxylate substrate first undergoes adenylation by ATP, followed by a thioesterification in the presence of CoA to yield the final CoA thioester. The chain is 4-coumarate--CoA ligase-like 9 from Arabidopsis thaliana (Mouse-ear cress).